Reading from the N-terminus, the 391-residue chain is NADH-quinone oxidoreductase subunit D (391 aa).

This sequence belongs to the complex I 49 kDa subunit family. NDH-1 is composed of 14 different subunits. Subunits NuoB, C, D, E, F, and G constitute the peripheral sector of the complex.

The protein resides in the cell inner membrane. It carries out the reaction a quinone + NADH + 5 H(+)(in) = a quinol + NAD(+) + 4 H(+)(out). Functionally, NDH-1 shuttles electrons from NADH, via FMN and iron-sulfur (Fe-S) centers, to quinones in the respiratory chain. The immediate electron acceptor for the enzyme in this species is believed to be ubiquinone. Couples the redox reaction to proton translocation (for every two electrons transferred, four hydrogen ions are translocated across the cytoplasmic membrane), and thus conserves the redox energy in a proton gradient. In Rickettsia massiliae (strain Mtu5), this protein is NADH-quinone oxidoreductase subunit D.